The sequence spans 458 residues: Argininosuccinate lyase (458 aa).

Belongs to the lyase 1 family. Argininosuccinate lyase subfamily.

The protein localises to the cytoplasm. It carries out the reaction 2-(N(omega)-L-arginino)succinate = fumarate + L-arginine. It functions in the pathway amino-acid biosynthesis; L-arginine biosynthesis; L-arginine from L-ornithine and carbamoyl phosphate: step 3/3. This is Argininosuccinate lyase from Salmonella typhimurium (strain LT2 / SGSC1412 / ATCC 700720).